The following is a 248-amino-acid chain: 3-deoxy-manno-octulosonate cytidylyltransferase (248 aa).

Belongs to the KdsB family.

The protein localises to the cytoplasm. It carries out the reaction 3-deoxy-alpha-D-manno-oct-2-ulosonate + CTP = CMP-3-deoxy-beta-D-manno-octulosonate + diphosphate. It functions in the pathway nucleotide-sugar biosynthesis; CMP-3-deoxy-D-manno-octulosonate biosynthesis; CMP-3-deoxy-D-manno-octulosonate from 3-deoxy-D-manno-octulosonate and CTP: step 1/1. It participates in bacterial outer membrane biogenesis; lipopolysaccharide biosynthesis. In terms of biological role, activates KDO (a required 8-carbon sugar) for incorporation into bacterial lipopolysaccharide in Gram-negative bacteria. The protein is 3-deoxy-manno-octulosonate cytidylyltransferase of Leptospira interrogans serogroup Icterohaemorrhagiae serovar copenhageni (strain Fiocruz L1-130).